The sequence spans 99 residues: Large ribosomal subunit protein eL42 (99 aa).

The protein belongs to the eukaryotic ribosomal protein eL42 family.

This Chlamydomonas reinhardtii (Chlamydomonas smithii) protein is Large ribosomal subunit protein eL42 (RPL44).